Consider the following 197-residue polypeptide: Outer-membrane lipoprotein LolB (197 aa).

Residues 1–20 (MNRSRRLALFCLGAPLLLQA) form the signal peptide. Cysteine 21 is lipidated: N-palmitoyl cysteine. Cysteine 21 carries the S-diacylglycerol cysteine lipid modification.

Belongs to the LolB family. As to quaternary structure, monomer.

The protein resides in the cell outer membrane. Its function is as follows. Plays a critical role in the incorporation of lipoproteins in the outer membrane after they are released by the LolA protein. The sequence is that of Outer-membrane lipoprotein LolB from Cupriavidus necator (strain ATCC 17699 / DSM 428 / KCTC 22496 / NCIMB 10442 / H16 / Stanier 337) (Ralstonia eutropha).